A 147-amino-acid chain; its full sequence is Protein MC014 (147 aa).

It localises to the host nucleus. The polypeptide is Protein MC014 (MC014) (Homo sapiens (Human)).